The sequence spans 237 residues: 1-(5-phosphoribosyl)-5-[(5-phosphoribosylamino)methylideneamino] imidazole-4-carboxamide isomerase (237 aa).

The active-site Proton acceptor is Asp-8. Residue Asp-129 is the Proton donor of the active site.

It belongs to the HisA/HisF family.

It localises to the cytoplasm. The catalysed reaction is 1-(5-phospho-beta-D-ribosyl)-5-[(5-phospho-beta-D-ribosylamino)methylideneamino]imidazole-4-carboxamide = 5-[(5-phospho-1-deoxy-D-ribulos-1-ylimino)methylamino]-1-(5-phospho-beta-D-ribosyl)imidazole-4-carboxamide. It functions in the pathway amino-acid biosynthesis; L-histidine biosynthesis; L-histidine from 5-phospho-alpha-D-ribose 1-diphosphate: step 4/9. This is 1-(5-phosphoribosyl)-5-[(5-phosphoribosylamino)methylideneamino] imidazole-4-carboxamide isomerase from Clostridium botulinum (strain Alaska E43 / Type E3).